Consider the following 551-residue polypeptide: Chaperonin GroEL (551 aa).

ATP contacts are provided by residues 30 to 33 (TLGP), K51, 87 to 91 (DGTTT), G415, 481 to 483 (NAA), and D497.

It belongs to the chaperonin (HSP60) family. In terms of assembly, forms a cylinder of 14 subunits composed of two heptameric rings stacked back-to-back. Interacts with the co-chaperonin GroES.

The protein localises to the cytoplasm. It carries out the reaction ATP + H2O + a folded polypeptide = ADP + phosphate + an unfolded polypeptide.. In terms of biological role, together with its co-chaperonin GroES, plays an essential role in assisting protein folding. The GroEL-GroES system forms a nano-cage that allows encapsulation of the non-native substrate proteins and provides a physical environment optimized to promote and accelerate protein folding. This chain is Chaperonin GroEL, found in Magnetococcus marinus (strain ATCC BAA-1437 / JCM 17883 / MC-1).